Reading from the N-terminus, the 31-residue chain is Cytochrome b6-f complex subunit 6 (31 aa).

A helical membrane pass occupies residues 4 to 24; sequence VISYLSLLFISFLFALTLFIV.

The protein belongs to the PetL family. As to quaternary structure, the 4 large subunits of the cytochrome b6-f complex are cytochrome b6, subunit IV (17 kDa polypeptide, PetD), cytochrome f and the Rieske protein, while the 4 small subunits are PetG, PetL, PetM and PetN. The complex functions as a dimer.

It localises to the plastid. Its subcellular location is the chloroplast thylakoid membrane. In terms of biological role, component of the cytochrome b6-f complex, which mediates electron transfer between photosystem II (PSII) and photosystem I (PSI), cyclic electron flow around PSI, and state transitions. PetL is important for photoautotrophic growth as well as for electron transfer efficiency and stability of the cytochrome b6-f complex. The protein is Cytochrome b6-f complex subunit 6 of Chara vulgaris (Common stonewort).